Consider the following 253-residue polypeptide: CD151 antigen (253 aa).

The Cytoplasmic segment spans residues 1–18 (MGEFNEKKATCGTVCLKY). 2 S-palmitoyl cysteine lipidation sites follow: Cys11 and Cys15. Residues 19–39 (LLFTYNCCFWLAGLAVMAVGI) traverse the membrane as a helical segment. Residues 40–57 (WTLALKSDYISLLASSTY) lie on the Extracellular side of the membrane. The helical transmembrane segment at 58-78 (LATAYILVVAGVVVMVTGVLG) threads the bilayer. The Cytoplasmic portion of the chain corresponds to 79-91 (CCATFKERRNLLR). The helical transmembrane segment at 92-112 (LYFILLLIIFLLEIIAGILAY) threads the bilayer. Residues 113–221 (VYYQQLNTEL…LESFIQEHLR (109 aa)) lie on the Extracellular side of the membrane. The N-linked (GlcNAc...) asparagine glycan is linked to Asn159. Residues 222–242 (VIGAVGIGIACVQVFGMIFTC) traverse the membrane as a helical segment. S-palmitoyl cysteine attachment occurs at residues Cys242 and Cys243. Topologically, residues 243–253 (CLYRSLKLEHY) are cytoplasmic.

The protein belongs to the tetraspanin (TM4SF) family. In terms of assembly, interacts with integrins ITGA3:ITGB1, ITGA5:ITGB1, ITGA3:ITGB1 and ITGA6:ITGB4 and with CD9 and CD181. Interacts (via the second extracellular domain) with integrin ITGAV:ITGB3. Interacts with ITGA3; this interaction modulates ITGA3 glycosylation pattern. Interacts with F11R. Interacts with RAC1 and CDC42; these interactions mediate physical association of RAC1 and CDC42 with integrin adhesion receptor complexes. Palmitoylated. Palmitoylation by ZDHHC2 regulates CD151 expression, association with other tetraspanin family proteins and function in cell adhesion. In terms of processing, ubiquitinated by RNF128 on lysine residues present in the tetraspanin amino terminus via 'Lys-48'-linked ubiquitin leading to proteasomal degradation.

It localises to the cell membrane. In terms of biological role, structural component of specialized membrane microdomains known as tetraspanin-enriched microdomains (TERMs), which act as platforms for receptor clustering and signaling. Plays a role in various cellular and molecular mechanism through its association with both integrin and non-integrin proteins. These interactions facilitate critical cellular functions, including cell-to-cell communication, wound healing, platelet aggregation, trafficking, cell motility, and angiogenesis. Via interaction with JAM-A/F11R and integrin ITGA3:ITGB1, promotes the recruitment of signaling molecules such as RAC1, CDC42 and RhoGTPases to facilitate the polarization of epithelial cells and the reorganization of the actin cytoskeleton, which are critical steps in cell migration process. Regulates the glycosylation pattern of ITGA3:ITGB1 thereby modulating its activity. Plays an essential role in the maintenance of central laminin-binding integrin ITGA6:ITGB4-containing adhesion complexes. Essential for the proper assembly of the glomerular and tubular basement membranes in kidney. Contributes to T-cell activation by modulating integrin signaling leading to activation of downstream targets PTK2 and MAPK1/MAPK3. The chain is CD151 antigen (Cd151) from Rattus norvegicus (Rat).